Consider the following 298-residue polypeptide: MARTGFQGRKLGEAFEIWTEMLREENITILMGLSGAMVPAGMRKIIAWLIRNRYIDVLVSTGANLFHDIHEAMGFRHFMGSEHVNDCKLFEEGIDRIHDVFAYEKEFNVIDYTLAEIISEMSGVMSSREFLEEIAGRLNVKDRNSIVIAAYESKVPIFSPAIADSSIGIAAALAKREVVIDTIRDVEELTEIVVNSEKTGVIYVGGGVPKNFIQQTEVVARLKGYDVRGHEYAIQITTDVPQFGGLSGCTFEEGVSWGKISGKAKKVQVNCDATIALPVLAHGLIGIRRQKYPIFNGL.

The active-site Nucleophile is the K259.

The protein belongs to the deoxyhypusine synthase family. The cofactor is NAD(+).

It carries out the reaction [eIF5A protein]-L-lysine + spermidine = [eIF5A protein]-deoxyhypusine + propane-1,3-diamine. It functions in the pathway protein modification; eIF5A hypusination. Functionally, catalyzes the NAD-dependent oxidative cleavage of spermidine and the subsequent transfer of the butylamine moiety of spermidine to the epsilon-amino group of a specific lysine residue of the eIF-5A precursor protein to form the intermediate deoxyhypusine residue. The sequence is that of Probable deoxyhypusine synthase 2 (dys2) from Archaeoglobus fulgidus (strain ATCC 49558 / DSM 4304 / JCM 9628 / NBRC 100126 / VC-16).